The following is a 184-amino-acid chain: Protein Syd (184 aa).

Belongs to the Syd family.

Its subcellular location is the cell inner membrane. Functionally, interacts with the SecY protein in vivo. May bind preferentially to an uncomplexed state of SecY, thus functioning either as a chelating agent for excess SecY in the cell or as a regulatory factor that negatively controls the translocase function. The protein is Protein Syd of Photorhabdus laumondii subsp. laumondii (strain DSM 15139 / CIP 105565 / TT01) (Photorhabdus luminescens subsp. laumondii).